The primary structure comprises 393 residues: NAD(P)H-quinone oxidoreductase subunit H, chloroplastic (393 aa).

The protein belongs to the complex I 49 kDa subunit family. In terms of assembly, NDH is composed of at least 16 different subunits, 5 of which are encoded in the nucleus.

The protein resides in the plastid. It is found in the chloroplast thylakoid membrane. It catalyses the reaction a plastoquinone + NADH + (n+1) H(+)(in) = a plastoquinol + NAD(+) + n H(+)(out). The catalysed reaction is a plastoquinone + NADPH + (n+1) H(+)(in) = a plastoquinol + NADP(+) + n H(+)(out). Functionally, NDH shuttles electrons from NAD(P)H:plastoquinone, via FMN and iron-sulfur (Fe-S) centers, to quinones in the photosynthetic chain and possibly in a chloroplast respiratory chain. The immediate electron acceptor for the enzyme in this species is believed to be plastoquinone. Couples the redox reaction to proton translocation, and thus conserves the redox energy in a proton gradient. This chain is NAD(P)H-quinone oxidoreductase subunit H, chloroplastic, found in Saccharum hybrid (Sugarcane).